The following is a 244-amino-acid chain: NAD(P)H-quinone oxidoreductase subunit K (244 aa).

Residues Cys60, Cys61, Cys125, and Cys156 each contribute to the [4Fe-4S] cluster site.

This sequence belongs to the complex I 20 kDa subunit family. In terms of assembly, NDH-1 can be composed of about 15 different subunits; different subcomplexes with different compositions have been identified which probably have different functions. [4Fe-4S] cluster serves as cofactor.

Its subcellular location is the cellular thylakoid membrane. It catalyses the reaction a plastoquinone + NADH + (n+1) H(+)(in) = a plastoquinol + NAD(+) + n H(+)(out). The catalysed reaction is a plastoquinone + NADPH + (n+1) H(+)(in) = a plastoquinol + NADP(+) + n H(+)(out). In terms of biological role, NDH-1 shuttles electrons from an unknown electron donor, via FMN and iron-sulfur (Fe-S) centers, to quinones in the respiratory and/or the photosynthetic chain. The immediate electron acceptor for the enzyme in this species is believed to be plastoquinone. Couples the redox reaction to proton translocation, and thus conserves the redox energy in a proton gradient. Cyanobacterial NDH-1 also plays a role in inorganic carbon-concentration. This Prochlorococcus marinus (strain AS9601) protein is NAD(P)H-quinone oxidoreductase subunit K.